A 699-amino-acid polypeptide reads, in one-letter code: Elongation factor G (699 aa).

In terms of domain architecture, tr-type G spans 8–283 (EHIRNIGICA…AVVDFLPSPI (276 aa)). GTP is bound by residues 17-24 (AHIDAGKT), 81-85 (DTPGH), and 135-138 (NKMD).

It belongs to the TRAFAC class translation factor GTPase superfamily. Classic translation factor GTPase family. EF-G/EF-2 subfamily.

It is found in the cytoplasm. Catalyzes the GTP-dependent ribosomal translocation step during translation elongation. During this step, the ribosome changes from the pre-translocational (PRE) to the post-translocational (POST) state as the newly formed A-site-bound peptidyl-tRNA and P-site-bound deacylated tRNA move to the P and E sites, respectively. Catalyzes the coordinated movement of the two tRNA molecules, the mRNA and conformational changes in the ribosome. The polypeptide is Elongation factor G (Rickettsia rickettsii).